Reading from the N-terminus, the 522-residue chain is Cytochrome P450 monooxygenase AKT7 (522 aa).

The chain crosses the membrane as a helical span at residues 10–30 (LYVTCTVLAALILGYIQAMII). A heme-binding site is contributed by C452.

The protein belongs to the cytochrome P450 family. Heme is required as a cofactor.

It is found in the membrane. Its pathway is mycotoxin biosynthesis. Cytochrome P450 monooxygenase; part of the gene clusters that mediate the biosynthesis of the host-selective toxins (HSTs) AK-toxins responsible for Japanese pear black spot disease by the Japanese pear pathotype. AK-toxins are esters of 9,10-epoxy 8-hydroxy 9-methyldecatrienoic acid (EDA). On cellular level, AK-toxins affect plasma membrane of susceptible cells and cause a sudden increase in loss of K(+) after a few minutes of toxin treatment. The acyl-CoA ligase AKT1, the hydrolase AKT2 and enoyl-CoA hydratase AKT3 are all involved in the biosynthesis of the AK-, AF- and ACT-toxin common 9,10-epoxy-8-hydroxy-9-methyl-decatrienoic acid (EDA) structural moiety. Part of the EDA biosynthesis occurs in the peroxisome since these 3 enzymes are localized in peroxisomes. The exact roles of the 3 enzymes, as well as of additional AK-toxin clusters enzymes, including AKT4, AKT6 and AKTS1, have still to be elucidated. The Cytochrome P450 monooxygenase AKT7 on the other side functions to limit production of EDA and AK-toxin, probably via the catalysis of a side reaction of EDA or its precursor. The polypeptide is Cytochrome P450 monooxygenase AKT7 (Alternaria alternata (Alternaria rot fungus)).